Consider the following 357-residue polypeptide: DNA polymerase IV (357 aa).

One can recognise a UmuC domain in the interval 4-185; it reads IIHVDMDCYF…LSLRQIPGVG (182 aa). D8 and D103 together coordinate Mg(2+). Residue E104 is part of the active site.

The protein belongs to the DNA polymerase type-Y family. As to quaternary structure, monomer. Mg(2+) serves as cofactor.

The protein resides in the cytoplasm. The enzyme catalyses DNA(n) + a 2'-deoxyribonucleoside 5'-triphosphate = DNA(n+1) + diphosphate. Functionally, poorly processive, error-prone DNA polymerase involved in untargeted mutagenesis. Copies undamaged DNA at stalled replication forks, which arise in vivo from mismatched or misaligned primer ends. These misaligned primers can be extended by PolIV. Exhibits no 3'-5' exonuclease (proofreading) activity. May be involved in translesional synthesis, in conjunction with the beta clamp from PolIII. The sequence is that of DNA polymerase IV from Shewanella oneidensis (strain ATCC 700550 / JCM 31522 / CIP 106686 / LMG 19005 / NCIMB 14063 / MR-1).